A 180-amino-acid polypeptide reads, in one-letter code: Fucolectin-2 (180 aa).

An N-terminal signal peptide occupies residues 1 to 22; sequence MKVKMIMLLFQILAILTLKSDS. The F5/8 type C-like stretch occupies residues 31–179; sequence QENVALRGRA…VEVNVLFPAP (149 aa). N58, D61, N63, and S72 together coordinate Ca(2+). 3 disulfide bridges follow: C73–C168, C104–C105, and C130–C146. Alpha-L-fucose contacts are provided by H75 and R101. The Cell attachment site motif lies at 101–103; the sequence is RGD. Residue R108 coordinates alpha-L-fucose. 2 residues coordinate Ca(2+): C168 and E169.

It belongs to the fucolectin family. Homotrimer. As to expression, parenchymal hepatocytes.

It localises to the secreted. Its subcellular location is the extracellular space. Acts as a defensive agent. Recognizes blood group fucosylated oligosaccharides including A, B, H and Lewis B-type antigens. Does not recognize Lewis A antigen and has low affinity for monovalent haptens. In Anguilla japonica (Japanese eel), this protein is Fucolectin-2.